Consider the following 843-residue polypeptide: Translation initiation factor IF-2 (843 aa).

2 disordered regions span residues 50–72 (LKSS…KTTS) and 94–260 (QRSP…TGPV). Positions 96–135 (SPEEIQAEQKREQDERRAAENAARDKVDADVRQRNEEQAR) are enriched in basic and acidic residues. Positions 139-173 (TATAAAAPAAKAEPAPAAAAPAPAPVVADAPASED) are enriched in low complexity. Composition is skewed to basic and acidic residues over residues 174–203 (AAAR…RGEA) and 227–236 (TTDEESDGAR). The span at 237-250 (RGRGGKGKLKKRNQ) shows a compositional bias: basic residues. Residues 343 to 516 (SRAPVVTVMG…EVLELTATPT (174 aa)) enclose the tr-type G domain. The tract at residues 352 to 359 (GHVDHGKT) is G1. 352–359 (GHVDHGKT) is a binding site for GTP. Positions 377–381 (GITQH) are G2. Positions 398-401 (DTPG) are G3. GTP-binding positions include 398–402 (DTPGH) and 452–455 (NKID). Positions 452-455 (NKID) are G4. The segment at 488-490 (SAK) is G5.

Belongs to the TRAFAC class translation factor GTPase superfamily. Classic translation factor GTPase family. IF-2 subfamily.

It localises to the cytoplasm. In terms of biological role, one of the essential components for the initiation of protein synthesis. Protects formylmethionyl-tRNA from spontaneous hydrolysis and promotes its binding to the 30S ribosomal subunits. Also involved in the hydrolysis of GTP during the formation of the 70S ribosomal complex. This Pseudomonas putida (strain W619) protein is Translation initiation factor IF-2.